We begin with the raw amino-acid sequence, 236 residues long: Ribosomal RNA small subunit methyltransferase G (236 aa).

Residues glycine 80, 131–132, and arginine 148 each bind S-adenosyl-L-methionine; that span reads AE.

The protein belongs to the methyltransferase superfamily. RNA methyltransferase RsmG family.

The protein localises to the cytoplasm. In terms of biological role, specifically methylates the N7 position of a guanine in 16S rRNA. The sequence is that of Ribosomal RNA small subunit methyltransferase G from Ureaplasma parvum serovar 3 (strain ATCC 27815 / 27 / NCTC 11736).